Here is a 25-residue protein sequence, read N- to C-terminus: Antimicrobial peptide 2 (25 aa).

Expressed by the skin glands.

It is found in the secreted. Its function is as follows. Has very strong antibacterial activity against Gram-positive bacterium S.aureus and very weak activity against Gram-negative bacterium E.coli. In Xenopus tropicalis (Western clawed frog), this protein is Antimicrobial peptide 2.